The chain runs to 1184 residues: PR domain zinc finger protein 10 (1184 aa).

Positions 122-162 (LDAKEEEEEEEDEDEDTEEEEEEDAEDTDVDDWQPDPPRPF) are disordered. The span at 125–155 (KEEEEEEEDEDEDTEEEEEEDAEDTDVDDWQ) shows a compositional bias: acidic residues. The 119-residue stretch at 202-320 (LPLVLYIDRF…PKQELKVWYA (119 aa)) folds into the SET domain. Positions 221–325 (IPKRTQFGPV…KVWYAASYAE (105 aa)) are N-terminal PR domain; essential for transcriptional activator activity. The C2H2-type 1 zinc finger occupies 349-371 (WPCYECNRRFISSEQLQQHLNSH). Lys-374 is covalently cross-linked (Glycyl lysine isopeptide (Lys-Gly) (interchain with G-Cter in SUMO2)). A compositionally biased stretch (basic residues) spans 381–401 (TRGRGRGRGKRRFGPGRRPGR). The tract at residues 381–405 (TRGRGRGRGKRRFGPGRRPGRPPKF) is disordered. Ser-418 is modified (phosphoserine). Thr-422 carries the phosphothreonine modification. The interval 444 to 487 (GLDQPEQASIPIPQLPQETPPSLEQEPETHTLHLQPQQEESLVP) is disordered. Over residues 475–487 (LHLQPQQEESLVP) the composition is skewed to polar residues. 8 C2H2-type zinc fingers span residues 520–542 (FKCL…LRFH), 550–572 (LTCD…MKLH), 578–600 (YSCI…VAIH), 606–629 (FTCP…RSFH), 634–656 (YQCT…MLRH), 662–685 (FLCS…QRMH), 717–740 (FKCR…SKRH), and 850–873 (VCCP…RKKH). The segment at 917–1164 (QAMTELSQTL…TGPSQQQTTQ (248 aa)) is C-terminal glutamine-rich region; essential for transcriptional activator activity. Positions 1004-1054 (EPAPAAPSASQVAGQPLSPSAQQVQQGLSPSHIQGSSSTQGQALQQQQNSS) are disordered. Positions 1014-1036 (QVAGQPLSPSAQQVQQGLSPSHI) are enriched in polar residues. Positions 1037–1054 (QGSSSTQGQALQQQQNSS) are enriched in low complexity.

Belongs to the class V-like SAM-binding methyltransferase superfamily. Present in brain, liver, kidney, spleen and thymus (at protein level).

It is found in the nucleus. Transcriptional activator, essential for early embryonic development and survival of embryonic stem cells (ESCs). Supports cell growth and survival during early development by transcriptionally activating the expression of the translation initiation factor EIF3B, to sustain global translation. Activates the transcription of FLNC. This is PR domain zinc finger protein 10 (Prdm10) from Mus musculus (Mouse).